A 215-amino-acid chain; its full sequence is Adenylate kinase (215 aa).

Residue 10–15 (GAGKGT) coordinates ATP. Residues 30–59 (STGDMFRAAIKDQTPLGQEAKSYMDKGELV) are NMP. Residues Thr31, Arg36, 57–59 (ELV), 85–88 (GFPR), and Gln92 each bind AMP. The LID stretch occupies residues 126-163 (GRRICPTCGATYHVIYNPPKVEGVCDIDGSALVQREDD). An ATP-binding site is contributed by Arg127. Cys130 and Cys133 together coordinate Zn(2+). 136–137 (TY) contributes to the ATP binding site. Zn(2+)-binding residues include Cys150 and Asp153. Residues Arg160 and Arg171 each contribute to the AMP site. An ATP-binding site is contributed by Arg199.

This sequence belongs to the adenylate kinase family. Monomer.

Its subcellular location is the cytoplasm. It carries out the reaction AMP + ATP = 2 ADP. It participates in purine metabolism; AMP biosynthesis via salvage pathway; AMP from ADP: step 1/1. Functionally, catalyzes the reversible transfer of the terminal phosphate group between ATP and AMP. Plays an important role in cellular energy homeostasis and in adenine nucleotide metabolism. The sequence is that of Adenylate kinase from Exiguobacterium sibiricum (strain DSM 17290 / CCUG 55495 / CIP 109462 / JCM 13490 / 255-15).